Consider the following 767-residue polypeptide: Protein hunchback (767 aa).

Disordered regions lie at residues 30–51, 105–127, and 174–212; these read EPGH…PIPS, QQQY…HLMG, and EKLQ…SNSS. Residues 39–51 show a composition bias toward polar residues; that stretch reads SVASSPRQSPIPS. Low complexity predominate over residues 105–117; sequence QQQYQQHFQAAQQ. Basic and acidic residues predominate over residues 200 to 212; sequence EPEKEHDQMSNSS. 4 consecutive C2H2-type zinc fingers follow at residues 242–264, 271–293, 299–321, and 327–351; these read YKCK…TRTH, LQCP…IRKH, FQCD…RKSH, and YRCA…KYGH. 3 disordered regions span residues 357–424, 518–570, and 610–704; these read LDED…TSQL, QLQQ…QPQQ, and GVMT…APPS. Residues 386–397 show a composition bias toward gly residues; sequence IASGGSGSGSGS. Low complexity predominate over residues 518–527; sequence QLQQQNQQQS. A compositionally biased stretch (acidic residues) spans 528–537; that stretch reads DNEEEEQDDE. Residues 661–704 show a composition bias toward low complexity; sequence ANTSASSTASSSGNSSNASSNSNGNSSSNSSSSGTNSAAAAPPS. 2 C2H2-type zinc fingers span residues 714 to 736 and 742 to 766; these read YECK…MGYH and FKCN…RNAH.

The protein belongs to the hunchback C2H2-type zinc-finger protein family.

Its subcellular location is the nucleus. Its function is as follows. Gap class segmentation protein that controls development of head structures. The chain is Protein hunchback (hb) from Drosophila orena (Fruit fly).